Reading from the N-terminus, the 358-residue chain is Sulfate/thiosulfate import ATP-binding protein CysA 1 (358 aa).

In terms of domain architecture, ABC transporter spans 3–237; that stretch reads IQVENIRKAF…PASAFVYGFL (235 aa). 35–42 is a binding site for ATP; the sequence is GPSGCGKT.

It belongs to the ABC transporter superfamily. Sulfate/tungstate importer (TC 3.A.1.6) family. As to quaternary structure, the complex is composed of two ATP-binding proteins (CysA), two transmembrane proteins (CysT and CysW) and a solute-binding protein (CysP).

The protein localises to the cell inner membrane. The enzyme catalyses sulfate(out) + ATP + H2O = sulfate(in) + ADP + phosphate + H(+). The catalysed reaction is thiosulfate(out) + ATP + H2O = thiosulfate(in) + ADP + phosphate + H(+). Part of the ABC transporter complex CysAWTP involved in sulfate/thiosulfate import. Responsible for energy coupling to the transport system. In Chromobacterium violaceum (strain ATCC 12472 / DSM 30191 / JCM 1249 / CCUG 213 / NBRC 12614 / NCIMB 9131 / NCTC 9757 / MK), this protein is Sulfate/thiosulfate import ATP-binding protein CysA 1.